Consider the following 394-residue polypeptide: 1-deoxy-D-xylulose 5-phosphate reductoisomerase (394 aa).

Thr12, Gly13, Ser14, Ile15, Gly38, Asn41, and Asn132 together coordinate NADPH. Lys133 is a 1-deoxy-D-xylulose 5-phosphate binding site. Position 134 (Glu134) interacts with NADPH. Asp156 contributes to the Mn(2+) binding site. 1-deoxy-D-xylulose 5-phosphate is bound by residues Ser157, Glu158, Ser182, and His205. Glu158 contacts Mn(2+). Gly211 serves as a coordination point for NADPH. Residues Ser218, Asn223, Lys224, and Glu227 each contribute to the 1-deoxy-D-xylulose 5-phosphate site. A Mn(2+)-binding site is contributed by Glu227.

The protein belongs to the DXR family. Requires Mg(2+) as cofactor. Mn(2+) serves as cofactor.

It carries out the reaction 2-C-methyl-D-erythritol 4-phosphate + NADP(+) = 1-deoxy-D-xylulose 5-phosphate + NADPH + H(+). It participates in isoprenoid biosynthesis; isopentenyl diphosphate biosynthesis via DXP pathway; isopentenyl diphosphate from 1-deoxy-D-xylulose 5-phosphate: step 1/6. Its function is as follows. Catalyzes the NADPH-dependent rearrangement and reduction of 1-deoxy-D-xylulose-5-phosphate (DXP) to 2-C-methyl-D-erythritol 4-phosphate (MEP). The polypeptide is 1-deoxy-D-xylulose 5-phosphate reductoisomerase (Paenarthrobacter aurescens (strain TC1)).